The following is a 449-amino-acid chain: Kynurenine 3-monooxygenase (449 aa).

The protein belongs to the aromatic-ring hydroxylase family. KMO subfamily. It depends on FAD as a cofactor.

It catalyses the reaction L-kynurenine + NADPH + O2 + H(+) = 3-hydroxy-L-kynurenine + NADP(+) + H2O. The protein operates within cofactor biosynthesis; NAD(+) biosynthesis; quinolinate from L-kynurenine: step 1/3. Its function is as follows. Catalyzes the hydroxylation of L-kynurenine (L-Kyn) to form 3-hydroxy-L-kynurenine (L-3OHKyn). Required for synthesis of quinolinic acid. The sequence is that of Kynurenine 3-monooxygenase from Legionella pneumophila (strain Corby).